The following is a 404-amino-acid chain: Cysteine desulfurase IscS (404 aa).

Pyridoxal 5'-phosphate is bound by residues 75 to 76 (AT), Asn155, Gln183, and 203 to 205 (SGH). N6-(pyridoxal phosphate)lysine is present on Lys206. Thr243 serves as a coordination point for pyridoxal 5'-phosphate. The active-site Cysteine persulfide intermediate is Cys328. Cys328 serves as a coordination point for [2Fe-2S] cluster.

It belongs to the class-V pyridoxal-phosphate-dependent aminotransferase family. NifS/IscS subfamily. As to quaternary structure, homodimer. Forms a heterotetramer with IscU, interacts with other sulfur acceptors. It depends on pyridoxal 5'-phosphate as a cofactor.

The protein resides in the cytoplasm. The enzyme catalyses (sulfur carrier)-H + L-cysteine = (sulfur carrier)-SH + L-alanine. The protein operates within cofactor biosynthesis; iron-sulfur cluster biosynthesis. Its function is as follows. Master enzyme that delivers sulfur to a number of partners involved in Fe-S cluster assembly, tRNA modification or cofactor biosynthesis. Catalyzes the removal of elemental sulfur atoms from cysteine to produce alanine. Functions as a sulfur delivery protein for Fe-S cluster synthesis onto IscU, an Fe-S scaffold assembly protein, as well as other S acceptor proteins. This is Cysteine desulfurase IscS from Shewanella putrefaciens (strain CN-32 / ATCC BAA-453).